The sequence spans 316 residues: Alkaline ceramidase YPC1 (316 aa).

Over 1 to 36 the chain is Lumenal; the sequence is MGIFRWNYPESSVPGVWGETTSTIDWCEENYVVSPY. Cys27 and Cys219 form a disulfide bridge. The stretch at 37 to 57 is an intramembrane region; it reads IAEWSNTLTNSVFILSAIYTT. Residues 58 to 68 are Lumenal-facing; the sequence is YSAYKNKLEKR. The stretch at 69–89 is an intramembrane region; that stretch reads FLLIGFGYGLVGVGSWLFHMT. Residues 90-93 lie on the Lumenal side of the membrane; sequence LKYR. A helical membrane pass occupies residues 94–114; it reads FQLLDELPMIYAMCIPTWSLV. Topologically, residues 115 to 135 are cytoplasmic; it reads CEAKEALLNGDNHKKVPLFEQ. The chain crosses the membrane as a helical span at residues 136-156; that stretch reads IFIGVIIGLAVTTASILYVIY. Topologically, residues 157-160 are lumenal; it reads KNVD. The stretch at 161–181 is an intramembrane region; the sequence is IHQILFGVQIVVVAATAGSLT. Topologically, residues 182–195 are lumenal; that stretch reads YRYVHDPLAKRNLK. The stretch at 196–216 is an intramembrane region; the sequence is ASMALGAILFLSGYISWLLDI. The Lumenal segment spans residues 217 to 228; that stretch reads HYCSFWVHVRRS. A helical membrane pass occupies residues 229–249; the sequence is ILALPLGVLLEPHGWWHILTG. Residues 250-316 lie on the Cytoplasmic side of the membrane; sequence MGIYFYIVSL…DQSIEVKKEK (67 aa).

This sequence belongs to the alkaline ceramidase family.

The protein resides in the endoplasmic reticulum membrane. The enzyme catalyses N-hexanoyl-sphinganine + H2O = hexanoate + sphinganine. The catalysed reaction is sphinganine + hexadecanoate = N-hexadecanoylsphinganine + H2O. It catalyses the reaction N-hexadecanoyl-(4R)-hydroxysphinganine + H2O = (4R)-hydroxysphinganine + hexadecanoate. It carries out the reaction N-hexadecanoylsphing-4-enine + H2O = sphing-4-enine + hexadecanoate. The enzyme catalyses an N-acyl-(4R)-4-hydroxysphinganine + H2O = (4R)-hydroxysphinganine + a fatty acid. In terms of biological role, alkaline ceramidase that hydrolyzes phytoceramide and also dihydroceramide into phytosphingosine or dihydrosphingosine. Prefers phytoceramide. Also has reverse activity as acyl-CoA-independent ceramide synthase, catalyzing synthesis of phytoceramide and dihydroceramide from palmitic acid and phytosphingosine or dihydrosphingosine. Is not responsible for the breakdown of unsaturated ceramide. Preferentially uses very long chain fatty acids (C-24 and C-26) in vivo compared to C-16 in vitro. This is Alkaline ceramidase YPC1 (YPC1) from Saccharomyces cerevisiae (strain ATCC 204508 / S288c) (Baker's yeast).